Reading from the N-terminus, the 532-residue chain is MKAFTSLLCGLGLSTTLAKAISLQRPLGLDKDVLLQAAEKFGLDLDLDHLLKELDSNVLDAWAQIEHLYPNQVMSLETSTKPKFPEAIKTKKDWDFVVKNDAIENYQLRVNKIKDPKILGIDPNVTQYTGYLDVEDEDKHFFFWTFESRNDPAKDPVILWLNGGPGCSSLTGLFFELGPSSIGPDLKPIGNPYSWNSNATVIFLDQPVNVGFSYSGSSGVSNTVAAGKDVYNFLELFFDQFPEYVNKGQDFHIAGESYAGHYIPVFASEILSHKDRNFNLTSVLIGNGLTDPLTQYNYYEPMACGEGGEPSVLPSEECSAMEDSLERCLGLIESCYDSQSVWSCVPATIYCNNAQLAPYQRTGRNVYDIRKDCEGGNLCYPTLQDIDDYLNQDYVKEAVGAEVDHYESCNFDINRNFLFAGDWMKPYHTAVTDLLNQDLPILVYAGDKDFICNWLGNKAWTDVLPWKYDEEFASQKVRNWTASITDEVAGEVKSYKHFTYLRVFNGGHMVPFDVPENALSMVNEWIHGGFSL.

Positions 1 to 20 (MKAFTSLLCGLGLSTTLAKA) are cleaved as a signal peptide. Residues 21 to 111 (ISLQRPLGLD…AIENYQLRVN (91 aa)) constitute a propeptide, mediates translocation across the endoplasmic reticulum, renders the enzyme inactive during transit, and targets the molecule to the vacuole. Residues 24-27 (QRPL) carry the Vacuolar targeting signal motif. 2 N-linked (GlcNAc...) (high mannose) asparagine glycosylation sites follow: N124 and N198. Intrachain disulfides connect C167/C409, C304/C318, C328/C351, C335/C344, and C373/C379. Residue S257 is part of the active site. N279 is a glycosylation site (N-linked (GlcNAc...) (high mannose) asparagine). D449 is a catalytic residue. Position 452 (C452) interacts with substrate. The N-linked (GlcNAc...) (high mannose) asparagine glycan is linked to N479. The active site involves H508. Residue M509 coordinates substrate.

It belongs to the peptidase S10 family. Enters the endoplasmic reticulum as an inactive zymogen and is modified by four N-linked core oligosaccharides, giving rise to a precursor known as P1 (67 kDa). As P1 transits through the Golgi, extension of its core oligosaccharides leads to the Golgi-modified P2 precursor (69 kDa). P2 is sorted away from secretory proteins at or beyond a late Golgi compartment and is subsequently delivered to the vacuole via a prevacuolar endosome-like compartment. Upon arrival in the vacuole, the N-terminal prosegment of P2 is cleaved by vacuolar proteases to yield the enzymatically active mature vacuolar form of CPY (61 kDa). In terms of processing, the four high mannose core N-glycans found in mature CPY are Man(11-15)GlcNAc(2) at Asn-124, Man(8-12)GlcNAc(2) at Asn-198, Man(9-14)GlcNAc(2) at Asn-279 and phosphorylated Man(12-17)GlcNAc(2) as well as Man(11-16)GlcNAc(2) at Asn-479.

The protein resides in the vacuole lumen. It carries out the reaction Release of a C-terminal amino acid with broad specificity.. Its activity is regulated as follows. Inhibited by ZPCK. Vacuolar serine-type carboxypeptidase involved in degradation of small peptides. Digests preferentially peptides containing an aliphatic or hydrophobic residue in P1' position, as well as methionine, leucine or phenylalanine in P1 position of ester substrate. Also plays a role in breakdown of the autophagic body and the autophagosome-dependent protein synthesis. Plays a key role in phytochelatin (PC) synthesis from glutathione (GSH) by cleaving the Gly from GSH and form the PC-peptides of the structure (gamma-Glu-Cys)2-Gly. Also involved in resistance to xenobiotics via the degradation of glutathione-S-conjugates. The protein is Carboxypeptidase Y of Saccharomyces cerevisiae (strain ATCC 204508 / S288c) (Baker's yeast).